We begin with the raw amino-acid sequence, 634 residues long: Chaperone protein DnaK (634 aa).

Threonine 199 carries the phosphothreonine; by autocatalysis modification. Residues 601–618 are compositionally biased toward low complexity; the sequence is AAAGQAQAESGAGAQGNA. Positions 601–634 are disordered; the sequence is AAAGQAQAESGAGAQGNAKPDDVVDAEFEEVDKK. Residues 623-634 show a composition bias toward acidic residues; the sequence is VVDAEFEEVDKK.

The protein belongs to the heat shock protein 70 family.

Acts as a chaperone. The protein is Chaperone protein DnaK of Acidithiobacillus ferrooxidans (strain ATCC 23270 / DSM 14882 / CIP 104768 / NCIMB 8455) (Ferrobacillus ferrooxidans (strain ATCC 23270)).